The primary structure comprises 196 residues: Signaling threshold-regulating transmembrane adapter 1 (196 aa).

The signal sequence occupies residues 1 to 24 (MNQADPRLRAVCLWTLTSAAMSRG). The Extracellular portion of the chain corresponds to 25-40 (DNCTDLLALGIPSITQ). N-linked (GlcNAc...) asparagine glycosylation occurs at Asn26. Residues 41-61 (AWGLWVLLGAVTLLFLISLAA) form a helical membrane-spanning segment. Topologically, residues 62 to 196 (HLSQWTRGRS…AYANSQPAAS (135 aa)) are cytoplasmic. 2 positions are modified to phosphoserine: Ser80 and Ser83. Tyr90 carries the post-translational modification Phosphotyrosine. Residues 90–93 (YGNL) are interaction with GRB2. Ser102 is subject to Phosphoserine. Position 127 is a phosphotyrosine (Tyr127). The segment at 132-167 (LRPPQGRIPGPGTPVKYSEVVLDSEPKSQASGPEPE) is disordered. At Thr144 the chain carries Phosphothreonine. Residues 146 to 151 (VKYSEV) are interaction with PTPN11. A phosphotyrosine mark is found at Tyr148 and Tyr169. Residues 169–172 (YASV) form an interaction with CSK region. Ser182 is subject to Phosphoserine. Phosphotyrosine is present on Tyr188. An interaction with GRB2 region spans residues 188 to 191 (YANS).

Homodimer; disulfide-linked. When phosphorylated, interacts with PTPN11/SHP2, GRB2 and CSK. Phosphorylated on tyrosines by LCK, FYN or ZAP70 upon TCR activation; which leads to the recruitment of PTPN11, GRB2 and CSK. As to expression, specifically expressed in T- and B-cells. Present in plasma cells but not in germinal center B-cells (at protein level). Expressed in T- and B-cell lymphoma.

It localises to the cell membrane. Its function is as follows. Negatively regulates TCR (T-cell antigen receptor)-mediated signaling in T-cells. Involved in positive selection of T-cells. The protein is Signaling threshold-regulating transmembrane adapter 1 (SIT1) of Homo sapiens (Human).